Here is a 155-residue protein sequence, read N- to C-terminus: Small ribosomal subunit protein uS7cz/uS7cy (155 aa).

This sequence belongs to the universal ribosomal protein uS7 family. In terms of assembly, part of the 30S ribosomal subunit.

The protein resides in the plastid. Functionally, one of the primary rRNA binding proteins, it binds directly to 16S rRNA where it nucleates assembly of the head domain of the 30S subunit. This chain is Small ribosomal subunit protein uS7cz/uS7cy (rps7-A), found in Cuscuta obtusiflora (Peruvian dodder).